Reading from the N-terminus, the 338-residue chain is Phenylalanine--tRNA ligase alpha subunit (338 aa).

Position 253 (E253) interacts with Mg(2+).

Belongs to the class-II aminoacyl-tRNA synthetase family. Phe-tRNA synthetase alpha subunit type 1 subfamily. In terms of assembly, tetramer of two alpha and two beta subunits. Requires Mg(2+) as cofactor.

It is found in the cytoplasm. The enzyme catalyses tRNA(Phe) + L-phenylalanine + ATP = L-phenylalanyl-tRNA(Phe) + AMP + diphosphate + H(+). This is Phenylalanine--tRNA ligase alpha subunit from Legionella pneumophila (strain Paris).